An 89-amino-acid polypeptide reads, in one-letter code: Small ribosomal subunit protein uS15 (89 aa).

The protein belongs to the universal ribosomal protein uS15 family. Part of the 30S ribosomal subunit. Forms a bridge to the 50S subunit in the 70S ribosome, contacting the 23S rRNA.

Its function is as follows. One of the primary rRNA binding proteins, it binds directly to 16S rRNA where it helps nucleate assembly of the platform of the 30S subunit by binding and bridging several RNA helices of the 16S rRNA. Functionally, forms an intersubunit bridge (bridge B4) with the 23S rRNA of the 50S subunit in the ribosome. The protein is Small ribosomal subunit protein uS15 of Histophilus somni (strain 129Pt) (Haemophilus somnus).